Here is a 280-residue protein sequence, read N- to C-terminus: Tritrans,polycis-undecaprenyl-diphosphate synthase (geranylgeranyl-diphosphate specific) (280 aa).

The active site involves Asp57. Asp57 is a Mg(2+) binding site. Residues 58–61, Arg70, His74, and 102–104 each bind substrate; these read GNRR and STE. Asn105 (proton acceptor) is an active-site residue. Residues Phe106, Arg108, Arg229, and 235–237 contribute to the substrate site; that span reads RIS. Position 248 (Glu248) interacts with Mg(2+).

It belongs to the UPP synthase family. As to quaternary structure, homodimer. Mg(2+) is required as a cofactor.

It carries out the reaction geranylgeranyl diphosphate + 7 isopentenyl diphosphate = tri-trans,hepta-cis-undecaprenyl diphosphate + 7 diphosphate. Functionally, catalyzes the sequential condensation of isopentenyl diphosphate (IPP) with geranylgeranyl diphosphate (GGPP) to yield (2Z,6Z,10Z,14Z,18Z,22Z,26Z,30E,34E,38E)-undecaprenyl diphosphate (tritrans,heptacis-UPP). It is probably the precursor of glycosyl carrier lipids. The polypeptide is Tritrans,polycis-undecaprenyl-diphosphate synthase (geranylgeranyl-diphosphate specific) (Methanocaldococcus jannaschii (strain ATCC 43067 / DSM 2661 / JAL-1 / JCM 10045 / NBRC 100440) (Methanococcus jannaschii)).